The chain runs to 20 residues: Cytochrome c oxidase subunit 6A2, mitochondrial (20 aa).

The segment at 1–20 is disordered; the sequence is ASGAKGDHGGAGASTXXLLT.

This sequence belongs to the cytochrome c oxidase subunit 6A family. In terms of assembly, component of the cytochrome c oxidase (complex IV, CIV), a multisubunit enzyme composed of 14 subunits. The complex is composed of a catalytic core of 3 subunits MT-CO1, MT-CO2 and MT-CO3, encoded in the mitochondrial DNA, and 11 supernumerary subunits COX4I, COX5A, COX5B, COX6A, COX6B, COX6C, COX7A, COX7B, COX7C, COX8 and NDUFA4, which are encoded in the nuclear genome. The complex exists as a monomer or a dimer and forms supercomplexes (SCs) in the inner mitochondrial membrane with NADH-ubiquinone oxidoreductase (complex I, CI) and ubiquinol-cytochrome c oxidoreductase (cytochrome b-c1 complex, complex III, CIII), resulting in different assemblies (supercomplex SCI(1)III(2)IV(1) and megacomplex MCI(2)III(2)IV(2)). Heart specific isoform.

Its subcellular location is the mitochondrion inner membrane. The protein operates within energy metabolism; oxidative phosphorylation. In terms of biological role, component of the cytochrome c oxidase, the last enzyme in the mitochondrial electron transport chain which drives oxidative phosphorylation. The respiratory chain contains 3 multisubunit complexes succinate dehydrogenase (complex II, CII), ubiquinol-cytochrome c oxidoreductase (cytochrome b-c1 complex, complex III, CIII) and cytochrome c oxidase (complex IV, CIV), that cooperate to transfer electrons derived from NADH and succinate to molecular oxygen, creating an electrochemical gradient over the inner membrane that drives transmembrane transport and the ATP synthase. Cytochrome c oxidase is the component of the respiratory chain that catalyzes the reduction of oxygen to water. Electrons originating from reduced cytochrome c in the intermembrane space (IMS) are transferred via the dinuclear copper A center (CU(A)) of subunit 2 and heme A of subunit 1 to the active site in subunit 1, a binuclear center (BNC) formed by heme A3 and copper B (CU(B)). The BNC reduces molecular oxygen to 2 water molecules unsing 4 electrons from cytochrome c in the IMS and 4 protons from the mitochondrial matrix. Plays a role in the assembly and stabilization of complex IV. The protein is Cytochrome c oxidase subunit 6A2, mitochondrial (COX6A2) of Canis lupus familiaris (Dog).